We begin with the raw amino-acid sequence, 165 residues long: Nucleotide-binding protein Syncc9605_0652 (165 aa).

This sequence belongs to the YajQ family.

Its function is as follows. Nucleotide-binding protein. The polypeptide is Nucleotide-binding protein Syncc9605_0652 (Synechococcus sp. (strain CC9605)).